We begin with the raw amino-acid sequence, 542 residues long: Organic anion transporter 3 (542 aa).

Over 1 to 9 (MTFSEILDR) the chain is Cytoplasmic. The residue at position 4 (S4) is a Phosphoserine. The chain crosses the membrane as a helical span at residues 10 to 30 (VGSMGPFQFLHVALLGFPILG). The Extracellular portion of the chain corresponds to 31–123 (MANHNLLQIF…LVCSSNKLKE (93 aa)). N86 is a glycosylation site (N-linked (GlcNAc...) asparagine). Residues 124 to 144 (MAQSIFMAGILIGGLVLGDLS) traverse the membrane as a helical segment. At 145–150 (DRFGRK) the chain is on the cytoplasmic side. A helical transmembrane segment spans residues 151 to 171 (PILTCCYLLLAASGSSTAFSP). Residues 172–176 (TLPIY) lie on the Extracellular side of the membrane. Residues 177 to 197 (MVFRFLCGFSISGISLSTVIL) form a helical membrane-spanning segment. At 198–212 (NVEWVPTKMRAITST) the chain is on the cytoplasmic side. Residues 213–233 (AIGYCYTIGQFILPGLAYAIP) traverse the membrane as a helical segment. At 234–236 (QWR) the chain is on the extracellular side. A helical transmembrane segment spans residues 237–257 (WLQLTVSVPYFIFSLLSWWIP). Residues 258-327 (ESIRWLVLAG…FRTPILRRVT (70 aa)) lie on the Cytoplasmic side of the membrane. The helical transmembrane segment at 328 to 348 (LCLSLAWFATGFAYYSLAMGV) threads the bilayer. The Extracellular portion of the chain corresponds to 349–354 (EEFGVN). A helical membrane pass occupies residues 355-375 (IYILQIIFGGVDIPAKFITIL). Topologically, residues 376 to 389 (SLSYLGRHITQGAA) are cytoplasmic. A helical transmembrane segment spans residues 390 to 410 (LILAGAAILSLIFVPMDMSLL). Residue R411 is a topological domain, extracellular. The helical transmembrane segment at 412–432 (TILAVFGKGCLSGSFSCLFLY) threads the bilayer. The Cytoplasmic portion of the chain corresponds to 433-471 (TSELFPTVIRQTGMGISNVWARVGSMISPLVKITGEIQP). Residues 472 to 492 (FIPNIIYGTVALLGGSAALFL) traverse the membrane as a helical segment. At 493-542 (PETLNQPLPETLEDMENWFLQSKKLKQEPEAEKASQRIPLQPSGPGVDRS) the chain is on the extracellular side. Over residues 518–527 (KQEPEAEKAS) the composition is skewed to basic and acidic residues. Positions 518–542 (KQEPEAEKASQRIPLQPSGPGVDRS) are disordered.

It belongs to the major facilitator (TC 2.A.1) superfamily. Organic cation transporter (TC 2.A.1.19) family.

The protein localises to the basolateral cell membrane. The catalysed reaction is estrone 3-sulfate(out) + glutarate(in) = estrone 3-sulfate(in) + glutarate(out). The enzyme catalyses estrone 3-sulfate(in) + 2-oxoglutarate(out) = estrone 3-sulfate(out) + 2-oxoglutarate(in). It carries out the reaction glutarate(in) + 2-oxoglutarate(out) = glutarate(out) + 2-oxoglutarate(in). It catalyses the reaction urate(in) + 2-oxoglutarate(out) = urate(out) + 2-oxoglutarate(in). The catalysed reaction is taurocholate(out) + glutarate(in) = taurocholate(in) + glutarate(out). The enzyme catalyses dehydroepiandrosterone 3-sulfate(out) + glutarate(in) = dehydroepiandrosterone 3-sulfate(in) + glutarate(out). It carries out the reaction prostaglandin F2alpha(out) + glutarate(in) = prostaglandin F2alpha(in) + glutarate(out). It catalyses the reaction prostaglandin F2alpha(out) + 2-oxoglutarate(in) = prostaglandin F2alpha(in) + 2-oxoglutarate(out). The catalysed reaction is (R)-carnitine(out) + 2-oxoglutarate(in) = (R)-carnitine(in) + 2-oxoglutarate(out). The enzyme catalyses glutarate(in) + (R)-carnitine(out) = glutarate(out) + (R)-carnitine(in). It carries out the reaction prostaglandin E2(out) + 2-oxoglutarate(in) = prostaglandin E2(in) + 2-oxoglutarate(out). It catalyses the reaction prostaglandin E2(out) + glutarate(in) = prostaglandin E2(in) + glutarate(out). The catalysed reaction is urate(in) + glutarate(out) = urate(out) + glutarate(in). The enzyme catalyses taurocholate(out) + 2-oxoglutarate(in) = taurocholate(in) + 2-oxoglutarate(out). It carries out the reaction dehydroepiandrosterone 3-sulfate(out) + 2-oxoglutarate(in) = dehydroepiandrosterone 3-sulfate(in) + 2-oxoglutarate(out). It catalyses the reaction kynurenate(out) + a dicarboxylate(in) = kynurenate(in) + a dicarboxylate(out). The catalysed reaction is (indol-3-yl)acetate(out) + a dicarboxylate(in) = (indol-3-yl)acetate(in) + a dicarboxylate(out). The enzyme catalyses indoxyl sulfate(out) + a dicarboxylate(in) = indoxyl sulfate(in) + a dicarboxylate(out). It carries out the reaction N-benzoylglycine(out) + a dicarboxylate(in) = N-benzoylglycine(in) + a dicarboxylate(out). It catalyses the reaction 3-carboxy-4-methyl-5-propyl-2-furanpropanoate(out) + a dicarboxylate(in) = 3-carboxy-4-methyl-5-propyl-2-furanpropanoate(in) + a dicarboxylate(out). The catalysed reaction is (6R)-L-erythro-5,6,7,8-tetrahydrobiopterin(out) + a dicarboxylate(in) = (6R)-L-erythro-5,6,7,8-tetrahydrobiopterin(in) + a dicarboxylate(out). The enzyme catalyses L-erythro-7,8-dihydrobiopterin(out) + a dicarboxylate(in) = L-erythro-7,8-dihydrobiopterin(in) + a dicarboxylate(out). It carries out the reaction L-sepiapterin(out) + a dicarboxylate(in) = L-sepiapterin(in) + a dicarboxylate(out). Functions as an organic anion/dicarboxylate exchanger that couples organic anion uptake indirectly to the sodium gradient. Transports organic anions such as estrone 3-sulfate (E1S) and urate in exchange for dicarboxylates such as glutarate or ketoglutarate (2-oxoglutarate). Plays an important role in the excretion of endogenous and exogenous organic anions, especially from the kidney and the brain. E1S transport is pH- and chloride-dependent and may also involve E1S/cGMP exchange. Responsible for the transport of prostaglandin E2 (PGE2) and prostaglandin F2(alpha) (PGF2(alpha)) in the basolateral side of the renal tubule. Involved in the transport of neuroactive tryptophan metabolites kynurenate and xanthurenate. Functions as a biopterin transporters involved in the uptake and the secretion of coenzymes tetrahydrobiopterin (BH4), dihydrobiopterin (BH2) and sepiapterin to urine, thereby determining baseline levels of blood biopterins. May be involved in the basolateral transport of steviol, a metabolite of the popular sugar substitute stevioside. May participate in the detoxification/ renal excretion of drugs and xenobiotics, such as the histamine H(2)-receptor antagonists fexofenadine and cimetidine, the antibiotic benzylpenicillin (PCG), the anionic herbicide 2,4-dichloro-phenoxyacetate (2,4-D), the diagnostic agent p-aminohippurate (PAH), the antiviral acyclovir (ACV), and the mycotoxin ochratoxin (OTA), by transporting these exogenous organic anions across the cell membrane in exchange for dicarboxylates such as 2-oxoglutarate. Contributes to the renal uptake of potent uremic toxins (indoxyl sulfate (IS), indole acetate (IA), hippurate/N-benzoylglycine (HA) and 3-carboxy-4-methyl-5-propyl-2-furanpropionate (CMPF)), pravastatin, PCG, E1S and dehydroepiandrosterone sulfate (DHEAS), and is partly involved in the renal uptake of temocaprilat (an angiotensin-converting enzyme (ACE) inhibitor). May contribute to the release of cortisol in the adrenals. Involved in one of the detoxification systems on the choroid plexus (CP), removes substrates such as E1S or taurocholate (TC), PCG, 2,4-D and PAH, from the cerebrospinal fluid (CSF) to the blood for eventual excretion in urine and bile. Also contributes to the uptake of several other organic compounds such as the prostanoids prostaglandin E(2) and prostaglandin F(2-alpha), L-carnitine, and the therapeutic drugs allopurinol, 6-mercaptopurine (6-MP) and 5-fluorouracil (5-FU). Mediates the transport of PAH, PCG, and the statins pravastatin and pitavastatin, from the cerebrum into the blood circulation across the blood-brain barrier (BBB). In summary, plays a role in the efflux of drugs and xenobiotics, helping reduce their undesired toxicological effects on the body. The polypeptide is Organic anion transporter 3 (SLC22A8) (Oryctolagus cuniculus (Rabbit)).